The chain runs to 835 residues: Telomere length regulation protein TEL2 homolog (835 aa).

Disordered stretches follow at residues 455-501 and 629-648; these read SADC…LAPY and LSHE…HSIR. Low complexity predominate over residues 464 to 473; the sequence is ESSPSKSCPK. Over residues 474–486 the composition is skewed to basic and acidic residues; that stretch reads AIEKSKMEAKADQ. Acidic residues predominate over residues 488–499; it reads SDSELDSDDDLA. Polar residues predominate over residues 636–648; it reads ESRSTGTGQHSIR.

It belongs to the TEL2 family.

The protein localises to the cytoplasm. Its subcellular location is the membrane. It localises to the nucleus. The protein resides in the chromosome. It is found in the telomere. Functionally, regulator of the DNA damage response (DDR). Part of the TTT complex that is required to stabilize protein levels of the phosphatidylinositol 3-kinase-related protein kinase (PIKK) family proteins. Promotes assembly, stabilizes and maintains the activity of TORC complexes, which regulate cell growth and survival in response to nutrient and hormonal signals. May be involved in telomere length regulation. The sequence is that of Telomere length regulation protein TEL2 homolog (telo2) from Xenopus laevis (African clawed frog).